The primary structure comprises 198 residues: MSKVLILKSSILGGYSQSAVLIDHLASHWENQGAAITVRDLGGKDVLPMVDGEIASGLRGGAELSARQQEMLALSDTLVAELKANDTIVIAAPMYNFTIPAQLKNWIDFIARAGVTFTYTETGSKGLVEGKRAVLVTTRGGAHKDGPTDHVVPYLKTVLAFIGITNVEVVYAEALNMGPEAHDKGMSEAKHSIDLLTA.

Residues Ser-10, 16–18 (SQS), 94–97 (MYNF), and 138–141 (TRGG) each bind FMN.

Belongs to the azoreductase type 1 family. As to quaternary structure, homodimer. FMN is required as a cofactor.

The catalysed reaction is 2 a quinone + NADH + H(+) = 2 a 1,4-benzosemiquinone + NAD(+). The enzyme catalyses N,N-dimethyl-1,4-phenylenediamine + anthranilate + 2 NAD(+) = 2-(4-dimethylaminophenyl)diazenylbenzoate + 2 NADH + 2 H(+). In terms of biological role, quinone reductase that provides resistance to thiol-specific stress caused by electrophilic quinones. Also exhibits azoreductase activity. Catalyzes the reductive cleavage of the azo bond in aromatic azo compounds to the corresponding amines. This is FMN-dependent NADH:quinone oxidoreductase from Shewanella putrefaciens (strain CN-32 / ATCC BAA-453).